Here is a 114-residue protein sequence, read N- to C-terminus: Ig kappa chain V region AH80-5 (114 aa).

The tract at residues Ile1–Cys22 is framework-1. The tract at residues Gln23–Ser35 is complementarity-determining-1. A framework-2 region spans residues Trp36–Tyr50. Residues Tyr51 to Ser57 form a complementarity-determining-2 region. Positions Gly58 to Cys93 are framework-3. Residues Gln94–Ala103 form a complementarity-determining-3 region. The framework-4 stretch occupies residues Phe104–Lys113.

This chain is Ig kappa chain V region AH80-5, found in Oryctolagus cuniculus (Rabbit).